The following is a 701-amino-acid chain: Triadin (701 aa).

Residues 1 to 28 (MTEITAEGNASTTTTVIDSKNGSVPKSP) are disordered. Residues 1–47 (MTEITAEGNASTTTTVIDSKNGSVPKSPGKVLKRTVTEDIVTTFSSP) lie on the Cytoplasmic side of the membrane. Residues 8–24 (GNASTTTTVIDSKNGSV) show a composition bias toward polar residues. A helical membrane pass occupies residues 48–68 (AAWLLVIALIITWSAVAVVMF). Over 69–701 (DLVDYKNFSA…SSPGQKQQGQ (633 aa)) the chain is Lumenal. Residue N75 is glycosylated (N-linked (GlcNAc...) asparagine). The segment covering 117 to 130 (DGDEDDDDGDEDTD) has biased composition (acidic residues). 3 disordered regions span residues 117–256 (DGDE…KHEQ), 273–654 (GDLR…TKRQ), and 676–701 (FPVT…QQGQ). Basic and acidic residues-rich tracts occupy residues 131-256 (KGEI…KHEQ), 303-351 (EGKE…KAPE), 365-385 (AKKD…EEHP), 391-426 (EKKE…KEET), 437-485 (GKKE…EVKP), and 492-643 (VKKE…KAKE). N-linked (GlcNAc...) asparagine glycosylation is present at N617. Low complexity predominate over residues 684 to 701 (PGESSGQPSSPGQKQQGQ).

Homooligomer of variable subunit number; disulfide-linked. Interacts with CASQ1 and RYR1 in skeletal muscle. Interacts with CASQ2. Phosphorylated by CaMK2. In terms of processing, N-glycosylated. As to expression, detected in heart (at protein level). Skeletal and cardiac muscle.

The protein localises to the sarcoplasmic reticulum membrane. Functionally, contributes to the regulation of lumenal Ca2+ release via the sarcoplasmic reticulum calcium release channels RYR1 and RYR2, a key step in triggering skeletal and heart muscle contraction. Required for normal organization of the triad junction, where T-tubules and the sarcoplasmic reticulum terminal cisternae are in close contact. Required for normal skeletal muscle strength. Plays a role in excitation-contraction coupling in the heart and in regulating the rate of heart beats. The protein is Triadin (TRDN) of Canis lupus familiaris (Dog).